The following is a 597-amino-acid chain: Vacuolar protein sorting-associated protein 33A (597 aa).

It belongs to the STXBP/unc-18/SEC1 family. As to quaternary structure, core component of at least two putative endosomal tethering complexes, the homotypic fusion and vacuole protein sorting (HOPS) complex and the class C core vacuole/endosome tethering (CORVET) complex. Their common core is composed of the class C Vps proteins VPS11, VPS16, VPS18 and VPS33A, which in HOPS further associates with VPS39 and VPS41 and in CORVET with VPS8 and TGFBRAP1. Interacts with RAB5C, UVRAG, STX17, MON1A and MON1B. Associates with adaptor protein complex 3 (AP-3) and clathrin. Interacts with PLEKHM1. Ubiquitous.

The protein localises to the cytoplasmic vesicle. The protein resides in the late endosome membrane. It localises to the lysosome membrane. It is found in the early endosome. Its subcellular location is the autophagosome. The protein localises to the clathrin-coated vesicle. Plays a role in vesicle-mediated protein trafficking to lysosomal compartments including the endocytic membrane transport and autophagic pathways. Believed to act as a core component of the putative HOPS and CORVET endosomal tethering complexes which are proposed to be involved in the Rab5-to-Rab7 endosome conversion probably implicating MON1A/B, and via binding SNAREs and SNARE complexes to mediate tethering and docking events during SNARE-mediated membrane fusion. The HOPS complex is proposed to be recruited to Rab7 on the late endosomal membrane and to regulate late endocytic, phagocytic and autophagic traffic towards lysosomes. The CORVET complex is proposed to function as a Rab5 effector to mediate early endosome fusion probably in specific endosome subpopulations. Required for fusion of endosomes and autophagosomes with lysosomes; the function is dependent on its association with VPS16 but not VIPAS39. The function in autophagosome-lysosome fusion implicates STX17 but not UVRAG. This is Vacuolar protein sorting-associated protein 33A (Vps33a) from Rattus norvegicus (Rat).